The primary structure comprises 221 residues: uncharacterized protein (221 aa).

This is an uncharacterized protein from Acanthamoeba polyphaga (Amoeba).